Reading from the N-terminus, the 309-residue chain is Aspartate carbamoyltransferase catalytic subunit (309 aa).

Carbamoyl phosphate-binding residues include arginine 55 and threonine 56. Lysine 85 provides a ligand contact to L-aspartate. Carbamoyl phosphate is bound by residues arginine 106, histidine 135, and glutamine 138. Positions 168 and 230 each coordinate L-aspartate. Leucine 268 and proline 269 together coordinate carbamoyl phosphate.

Belongs to the aspartate/ornithine carbamoyltransferase superfamily. ATCase family. In terms of assembly, heterododecamer (2C3:3R2) of six catalytic PyrB chains organized as two trimers (C3), and six regulatory PyrI chains organized as three dimers (R2).

It carries out the reaction carbamoyl phosphate + L-aspartate = N-carbamoyl-L-aspartate + phosphate + H(+). It participates in pyrimidine metabolism; UMP biosynthesis via de novo pathway; (S)-dihydroorotate from bicarbonate: step 2/3. Its function is as follows. Catalyzes the condensation of carbamoyl phosphate and aspartate to form carbamoyl aspartate and inorganic phosphate, the committed step in the de novo pyrimidine nucleotide biosynthesis pathway. This chain is Aspartate carbamoyltransferase catalytic subunit, found in Aliivibrio fischeri (strain ATCC 700601 / ES114) (Vibrio fischeri).